The primary structure comprises 141 residues: Large ribosomal subunit protein uL11 (141 aa).

Belongs to the universal ribosomal protein uL11 family. As to quaternary structure, part of the ribosomal stalk of the 50S ribosomal subunit. Interacts with L10 and the large rRNA to form the base of the stalk. L10 forms an elongated spine to which L12 dimers bind in a sequential fashion forming a multimeric L10(L12)X complex. In terms of processing, one or more lysine residues are methylated.

In terms of biological role, forms part of the ribosomal stalk which helps the ribosome interact with GTP-bound translation factors. This Aster yellows witches'-broom phytoplasma (strain AYWB) protein is Large ribosomal subunit protein uL11.